The following is a 2760-amino-acid chain: A-kinase anchor protein 13 (2760 aa).

Disordered regions lie at residues C356–C388, P442–Q517, A530–A577, S604–N711, E729–G857, G890–S940, E954–A1029, and E1132–T1162. Residues D378–C388 are compositionally biased toward polar residues. Basic and acidic residues predominate over residues P442–P454. The important for interaction with PRKAR2A stretch occupies residues Q482–A504. Over residues A530 to E547 the composition is skewed to low complexity. 3 stretches are compositionally biased toward polar residues: residues K620–P638, C654–G664, and D701–N711. Low complexity predominate over residues S769–E780. A Phosphoserine modification is found at S776. Position 801 is a phosphothreonine (T801). The segment covering P814–G826 has biased composition (basic and acidic residues). Residues E839–P849 are compositionally biased toward polar residues. Residues G906–R931 show a composition bias toward basic and acidic residues. The residue at position 932 (T932) is a Phosphothreonine. Composition is skewed to polar residues over residues Q958–T972 and T1001–S1020. Residue S962 is modified to Phosphoserine. The interval S1213 to Q1228 is important for interaction with PRKAR2A. 3 disordered regions span residues G1392 to E1411, L1425 to N1508, and S1520 to M1539. Over residues D1428–T1439 the composition is skewed to low complexity. Residues G1449 to F1472 are compositionally biased toward polar residues. Phosphoserine occurs at positions 1450, 1468, 1501, 1526, and 1585. An important for interaction with MAP2K3 region spans residues Q1546 to N1695. The tract at residues G1592–S1628 is disordered. Positions S1600 to S1611 are enriched in low complexity. 3 positions are modified to phosphoserine: S1625, S1628, and S1630. Residue K1654 is modified to N6-methyllysine. Residues R1733–T1755 are disordered. The Phorbol-ester/DAG-type zinc finger occupies G1753–C1800. Phosphoserine occurs at positions 1838, 1857, and 1891. The tract at residues M1881–C2760 is interaction with ESR1. T1892 carries the phosphothreonine modification. Phosphoserine occurs at positions 1894 and 1907. The 198-residue stretch at K1956 to K2153 folds into the DH domain. The region spanning M2176 to N2280 is the PH domain. A phosphoserine mark is found at S2292 and S2345. The stretch at S2292 to I2329 forms a coiled coil. Position 2415 is a phosphothreonine (T2415). The tract at residues H2422–L2450 is disordered. The span at Q2439–L2450 shows a compositional bias: basic and acidic residues. Phosphoserine is present on residues S2511 and S2514. Positions L2516–L2632 form a coiled coil. Disordered stretches follow at residues A2568–L2588 and T2660–C2760. Polar residues-rich tracts occupy residues T2660–R2684 and S2696–P2711. Position 2676 is a phosphoserine (S2676). Positions P2743–P2752 are enriched in low complexity.

Interacts with the cAMP-dependent protein kinase (PKA) holoenzyme and with the regulatory subunit PRKAR2A. Interacts with RHOA. Also interacts with RHOB and RHOC. Identified in a ternary complex with RHOA and PRKAR2A. Identified in a complex with NR3C1 and RHOA. Interacts with BRAF and KSR1. Identified in a complex with BRAF and KSR1. Component of a signaling complex containing at least AKAP13, PKN1, MAPK14, ZAK and MAP2K3. Within this complex, AKAP13 interacts directly with PKN1, which in turn recruits MAPK14, MAP2K3 and ZAK. Interacts (phosphorylated form) with YWHAB and YWHAZ. Interaction with YWHAB inhibits activation of RHOA, interferes with PKN1 binding and activation of MAP kinases. Interacts with GNA12. Interacts with IKBKB. Interacts with ESR1, THRA, PPARA and NME2. Interacts (via the C-terminal domain after the PH domain) with MEF2C and RXRB. Interacts (via the C-terminal domain after the PH domain) with PRKD1. In terms of tissue distribution, detected in bone osteoblasts (at protein level).

The protein localises to the cytoplasm. Its subcellular location is the cytosol. It localises to the cell cortex. It is found in the nucleus. The protein resides in the membrane. Its function is as follows. Scaffold protein that plays an important role in assembling signaling complexes downstream of several types of G protein-coupled receptors. Activates RHOA in response to signaling via G protein-coupled receptors via its function as Rho guanine nucleotide exchange factor. May also activate other Rho family members. Part of a kinase signaling complex that links ADRA1A and ADRA1B adrenergic receptor signaling to the activation of downstream p38 MAP kinases, such as MAPK11 and MAPK14. Part of a signaling complex that links ADRA1B signaling to the activation of RHOA and IKBKB/IKKB, leading to increased NF-kappa-B transcriptional activity. Part of a RHOA-dependent signaling cascade that mediates responses to lysophosphatidic acid (LPA), a signaling molecule that activates G-protein coupled receptors and potentiates transcriptional activation of the glucocorticoid receptor NR3C1. Part of a signaling cascade that stimulates MEF2C-dependent gene expression in response to lysophosphatidic acid (LPA). Part of a signaling pathway that activates MAPK11 and/or MAPK14 and leads to increased transcription activation of the estrogen receptors ESR1 and ESR2. Part of a signaling cascade that links cAMP and EGFR signaling to BRAF signaling and to PKA-mediated phosphorylation of KSR1, leading to the activation of downstream MAP kinases, such as MAPK1 or MAPK3. Functions as a scaffold protein that anchors cAMP-dependent protein kinase (PKA) and PRKD1. This promotes activation of PRKD1, leading to increased phosphorylation of HDAC5 and ultimately cardiomyocyte hypertrophy. Has no guanine nucleotide exchange activity on CDC42, Ras or Rac. Required for normal embryonic heart development, and in particular for normal sarcomere formation in the developing cardiomyocytes. Plays a role in cardiomyocyte growth and cardiac hypertrophy in response to activation of the beta-adrenergic receptor by phenylephrine or isoproterenol. Required for normal adaptive cardiac hypertrophy in response to pressure overload. Plays a role in osteogenesis. This is A-kinase anchor protein 13 from Rattus norvegicus (Rat).